Here is a 392-residue protein sequence, read N- to C-terminus: Phospho-N-acetylmuramoyl-pentapeptide-transferase (392 aa).

Helical transmembrane passes span 29–49 (AVLA…WVIG), 76–96 (TMGG…WFDL), 100–120 (FVWI…VDDW), 137–157 (YLWQ…CISE), 192–212 (AVSY…VIVG), 225–245 (GLAI…AYVT), 262–282 (SGEL…FLWF), 289–309 (VFMG…IAII), 314–334 (IVLA…MLQV), and 369–389 (QVVV…LSTL).

Belongs to the glycosyltransferase 4 family. MraY subfamily. Mg(2+) serves as cofactor.

The protein localises to the cell inner membrane. It catalyses the reaction UDP-N-acetyl-alpha-D-muramoyl-L-alanyl-gamma-D-glutamyl-meso-2,6-diaminopimeloyl-D-alanyl-D-alanine + di-trans,octa-cis-undecaprenyl phosphate = di-trans,octa-cis-undecaprenyl diphospho-N-acetyl-alpha-D-muramoyl-L-alanyl-D-glutamyl-meso-2,6-diaminopimeloyl-D-alanyl-D-alanine + UMP. It functions in the pathway cell wall biogenesis; peptidoglycan biosynthesis. In terms of biological role, catalyzes the initial step of the lipid cycle reactions in the biosynthesis of the cell wall peptidoglycan: transfers peptidoglycan precursor phospho-MurNAc-pentapeptide from UDP-MurNAc-pentapeptide onto the lipid carrier undecaprenyl phosphate, yielding undecaprenyl-pyrophosphoryl-MurNAc-pentapeptide, known as lipid I. This is Phospho-N-acetylmuramoyl-pentapeptide-transferase from Verminephrobacter eiseniae (strain EF01-2).